The primary structure comprises 288 residues: tRNA pseudouridine synthase A (288 aa).

The active-site Nucleophile is the Asp59. Tyr134 serves as a coordination point for substrate.

Belongs to the tRNA pseudouridine synthase TruA family. In terms of assembly, homodimer.

The enzyme catalyses uridine(38/39/40) in tRNA = pseudouridine(38/39/40) in tRNA. Its function is as follows. Formation of pseudouridine at positions 38, 39 and 40 in the anticodon stem and loop of transfer RNAs. The protein is tRNA pseudouridine synthase A of Leifsonia xyli subsp. xyli (strain CTCB07).